The primary structure comprises 308 residues: Pantothenate kinase (308 aa).

93–100 (GSVAVGKS) contacts ATP.

It belongs to the prokaryotic pantothenate kinase family.

The protein localises to the cytoplasm. It catalyses the reaction (R)-pantothenate + ATP = (R)-4'-phosphopantothenate + ADP + H(+). It participates in cofactor biosynthesis; coenzyme A biosynthesis; CoA from (R)-pantothenate: step 1/5. In Corynebacterium diphtheriae (strain ATCC 700971 / NCTC 13129 / Biotype gravis), this protein is Pantothenate kinase.